The sequence spans 642 residues: Threonine--tRNA ligase (642 aa).

In terms of domain architecture, TGS spans 1–61 (MPVITLPDGS…ETDSTLSIIT (61 aa)). The catalytic stretch occupies residues 243–534 (DHRKIGKQLD…LTEEFAGFFP (292 aa)). Zn(2+) is bound by residues Cys-334, His-385, and His-511.

It belongs to the class-II aminoacyl-tRNA synthetase family. As to quaternary structure, homodimer. The cofactor is Zn(2+).

It localises to the cytoplasm. The enzyme catalyses tRNA(Thr) + L-threonine + ATP = L-threonyl-tRNA(Thr) + AMP + diphosphate + H(+). Its function is as follows. Catalyzes the attachment of threonine to tRNA(Thr) in a two-step reaction: L-threonine is first activated by ATP to form Thr-AMP and then transferred to the acceptor end of tRNA(Thr). Also edits incorrectly charged L-seryl-tRNA(Thr). This chain is Threonine--tRNA ligase, found in Klebsiella pneumoniae (strain 342).